Consider the following 97-residue polypeptide: DNA-binding protein HU (97 aa).

This sequence belongs to the bacterial histone-like protein family. As to quaternary structure, has been isolated in complexes with 5S rRNA and bL25, and with 5S rRNA, bL25 and uL5. Homodimer.

Functionally, histone-like DNA-binding protein which is capable of wrapping DNA to stabilize it, and thus to prevent its denaturation under extreme environmental conditions. The polypeptide is DNA-binding protein HU (Thermus thermophilus (strain ATCC 27634 / DSM 579 / HB8)).